The primary structure comprises 154 residues: MKMEVIEKLSELSGIDKKSLRRILIILEFSLRKKDGSPTSFAEKFNIKSFGDLYNYIRDVKSNLKRDHEIEGFNGLTEMWKSVAPRAQYWIMDTFGEENPRDALFSASVFTMRTFGIMLDNLLLLKKIIKTLDEYQKEVTEYVSAQKFEAEDLE.

This is an uncharacterized protein from Methanocaldococcus jannaschii (strain ATCC 43067 / DSM 2661 / JAL-1 / JCM 10045 / NBRC 100440) (Methanococcus jannaschii).